The chain runs to 319 residues: Glutathione synthetase (319 aa).

The ATP-grasp domain maps to 129 to 314 (KLAILNFSRF…VAAMFADAVA (186 aa)). 155-211 (LKEHGDIIIKPLDGMGGMGIFRLTEKDPNIGSILETLMQLDSRTIMAQRYIPEIVHG) contributes to the ATP binding site. 2 residues coordinate Mg(2+): glutamate 285 and asparagine 287.

The protein belongs to the prokaryotic GSH synthase family. The cofactor is Mg(2+). It depends on Mn(2+) as a cofactor.

The catalysed reaction is gamma-L-glutamyl-L-cysteine + glycine + ATP = glutathione + ADP + phosphate + H(+). It functions in the pathway sulfur metabolism; glutathione biosynthesis; glutathione from L-cysteine and L-glutamate: step 2/2. This Neisseria meningitidis serogroup B (strain ATCC BAA-335 / MC58) protein is Glutathione synthetase.